The sequence spans 240 residues: 1-(5-phosphoribosyl)-5-[(5-phosphoribosylamino)methylideneamino] imidazole-4-carboxamide isomerase 1 (240 aa).

Aspartate 8 (proton acceptor) is an active-site residue. The Proton donor role is filled by aspartate 129.

It belongs to the HisA/HisF family.

It localises to the cytoplasm. It catalyses the reaction 1-(5-phospho-beta-D-ribosyl)-5-[(5-phospho-beta-D-ribosylamino)methylideneamino]imidazole-4-carboxamide = 5-[(5-phospho-1-deoxy-D-ribulos-1-ylimino)methylamino]-1-(5-phospho-beta-D-ribosyl)imidazole-4-carboxamide. It functions in the pathway amino-acid biosynthesis; L-histidine biosynthesis; L-histidine from 5-phospho-alpha-D-ribose 1-diphosphate: step 4/9. In Ruegeria pomeroyi (strain ATCC 700808 / DSM 15171 / DSS-3) (Silicibacter pomeroyi), this protein is 1-(5-phosphoribosyl)-5-[(5-phosphoribosylamino)methylideneamino] imidazole-4-carboxamide isomerase 1.